The sequence spans 213 residues: MATKLTERQQEILDLIRQTVARTGFPPTRAEIAQALGFRSPNAAEDHLKALARKGAIELTAGASRGIRLKDAEPTPSPILASLSQLLLPLVGRVAAGSPILAAEHVEREVGVDPSLFSQAPDYLLKVRGMSMRDAGILEGDLLAVKKSSEARNGQIIVARLGDDVTVKRLQRHGSRIELLPENPEFSPILVAPDDEFALEGVAVGLIRTHALH.

Positions 29 to 49 (RAEIAQALGFRSPNAAEDHLK) form a DNA-binding region, H-T-H motif. Residues Ser-131 and Lys-168 each act as for autocatalytic cleavage activity in the active site.

It belongs to the peptidase S24 family. In terms of assembly, homodimer.

It catalyses the reaction Hydrolysis of Ala-|-Gly bond in repressor LexA.. Represses a number of genes involved in the response to DNA damage (SOS response), including recA and lexA. In the presence of single-stranded DNA, RecA interacts with LexA causing an autocatalytic cleavage which disrupts the DNA-binding part of LexA, leading to derepression of the SOS regulon and eventually DNA repair. This is LexA repressor from Bordetella avium (strain 197N).